We begin with the raw amino-acid sequence, 379 residues long: PqqA peptide cyclase (379 aa).

In terms of domain architecture, Radical SAM core spans 8 to 220 (LPAPIGLLAE…IRVVEEARER (213 aa)). Positions 22, 26, and 29 each coordinate [4Fe-4S] cluster.

This sequence belongs to the radical SAM superfamily. PqqE family. In terms of assembly, interacts with PqqD. The interaction is necessary for activity of PqqE. [4Fe-4S] cluster is required as a cofactor.

The enzyme catalyses [PQQ precursor protein] + S-adenosyl-L-methionine = E-Y cross-linked-[PQQ precursor protein] + 5'-deoxyadenosine + L-methionine + H(+). Its pathway is cofactor biosynthesis; pyrroloquinoline quinone biosynthesis. In terms of biological role, catalyzes the cross-linking of a glutamate residue and a tyrosine residue in the PqqA protein as part of the biosynthesis of pyrroloquinoline quinone (PQQ). This chain is PqqA peptide cyclase, found in Methylobacterium nodulans (strain LMG 21967 / CNCM I-2342 / ORS 2060).